A 140-amino-acid chain; its full sequence is Small ribosomal subunit protein eS17y (140 aa).

It belongs to the eukaryotic ribosomal protein eS17 family.

This chain is Small ribosomal subunit protein eS17y (RPS17B), found in Arabidopsis thaliana (Mouse-ear cress).